The following is a 326-amino-acid chain: Beta-ketoacyl-[acyl-carrier-protein] synthase III (326 aa).

Catalysis depends on residues Cys116 and His253. The tract at residues 254–258 (QANIR) is ACP-binding. Asn283 is a catalytic residue.

It belongs to the thiolase-like superfamily. FabH family. In terms of assembly, homodimer.

The protein resides in the cytoplasm. The catalysed reaction is malonyl-[ACP] + acetyl-CoA + H(+) = 3-oxobutanoyl-[ACP] + CO2 + CoA. Its pathway is lipid metabolism; fatty acid biosynthesis. In terms of biological role, catalyzes the condensation reaction of fatty acid synthesis by the addition to an acyl acceptor of two carbons from malonyl-ACP. Catalyzes the first condensation reaction which initiates fatty acid synthesis and may therefore play a role in governing the total rate of fatty acid production. Possesses both acetoacetyl-ACP synthase and acetyl transacylase activities. Its substrate specificity determines the biosynthesis of branched-chain and/or straight-chain of fatty acids. This Jannaschia sp. (strain CCS1) protein is Beta-ketoacyl-[acyl-carrier-protein] synthase III.